Consider the following 263-residue polypeptide: Small ribosomal subunit protein eS1 (263 aa).

Basic and acidic residues predominate over residues 236-254 (GDGKGGSDEPGARVDRPEG). Residues 236–263 (GDGKGGSDEPGARVDRPEGYEPPVQETV) form a disordered region.

It belongs to the eukaryotic ribosomal protein eS1 family. Component of the small ribosomal subunit. Mature ribosomes consist of a small (40S) and a large (60S) subunit. The 40S subunit contains about 33 different proteins and 1 molecule of RNA (18S). The 60S subunit contains about 49 different proteins and 3 molecules of RNA (28S, 5.8S and 5S).

The protein resides in the cytoplasm. In Periplaneta americana (American cockroach), this protein is Small ribosomal subunit protein eS1.